Here is a 233-residue protein sequence, read N- to C-terminus: UPF0758 protein SRU_2338 (233 aa).

The MPN domain occupies 110 to 232; sequence QVTCPADVAD…HTSLAERGVI (123 aa). Positions 181, 183, and 194 each coordinate Zn(2+). Residues 181 to 194 carry the JAMM motif motif; sequence HNHPSGNPEPSRED.

This sequence belongs to the UPF0758 family.

The polypeptide is UPF0758 protein SRU_2338 (Salinibacter ruber (strain DSM 13855 / M31)).